Reading from the N-terminus, the 187-residue chain is MNLKNNTDQIKRDLITGSRRLSNYWWAITIGLGSSGFILAGISSYTKINLLPFTDTTQFLFIPQGITMLLYGTIGFLLDIYLWLLILWNVGAGYNEYNKKKGTVSIFRWGFPGTNRRIEVIYPIEQIQAIKLEIKQGLNPRHSISLKIQEKNEIVITPIGYLLPISVVEEQAANLASFLNIPLDSNQ.

2 helical membrane-spanning segments follow: residues 21-43 and 69-91; these read LSNY…AGIS and LLYG…WNVG.

It belongs to the Ycf4 family.

Its subcellular location is the plastid. The protein localises to the cyanelle thylakoid membrane. Seems to be required for the assembly of the photosystem I complex. This chain is Photosystem I assembly protein Ycf4, found in Cyanophora paradoxa.